The primary structure comprises 428 residues: Phosphoribosylamine--glycine ligase (428 aa).

The ATP-grasp domain occupies 109-316 (KDFLHRHGIP…LVELCLAALD (208 aa)). 135–196 (LRQVGAPVVV…EEFLTGEEAS (62 aa)) is a binding site for ATP. Positions 211–235 (SSQDHKARDDGDRGPNTGGMGAYSP) are disordered. Positions 213 to 223 (QDHKARDDGDR) are enriched in basic and acidic residues. Residues glutamate 286 and asparagine 288 each coordinate Mg(2+).

It belongs to the GARS family. Mg(2+) serves as cofactor. The cofactor is Mn(2+).

It carries out the reaction 5-phospho-beta-D-ribosylamine + glycine + ATP = N(1)-(5-phospho-beta-D-ribosyl)glycinamide + ADP + phosphate + H(+). It participates in purine metabolism; IMP biosynthesis via de novo pathway; N(1)-(5-phospho-D-ribosyl)glycinamide from 5-phospho-alpha-D-ribose 1-diphosphate: step 2/2. The chain is Phosphoribosylamine--glycine ligase (purD) from Allochromatium vinosum (strain ATCC 17899 / DSM 180 / NBRC 103801 / NCIMB 10441 / D) (Chromatium vinosum).